The following is a 202-amino-acid chain: ATP-dependent Clp protease proteolytic subunit 1 (202 aa).

S101 acts as the Nucleophile in catalysis. The active site involves H126.

This sequence belongs to the peptidase S14 family. In terms of assembly, fourteen ClpP subunits assemble into 2 heptameric rings which stack back to back to give a disk-like structure with a central cavity, resembling the structure of eukaryotic proteasomes.

It is found in the cytoplasm. It catalyses the reaction Hydrolysis of proteins to small peptides in the presence of ATP and magnesium. alpha-casein is the usual test substrate. In the absence of ATP, only oligopeptides shorter than five residues are hydrolyzed (such as succinyl-Leu-Tyr-|-NHMec, and Leu-Tyr-Leu-|-Tyr-Trp, in which cleavage of the -Tyr-|-Leu- and -Tyr-|-Trp bonds also occurs).. In terms of biological role, cleaves peptides in various proteins in a process that requires ATP hydrolysis. Has a chymotrypsin-like activity. Plays a major role in the degradation of misfolded proteins. The polypeptide is ATP-dependent Clp protease proteolytic subunit 1 (Rhizobium etli (strain ATCC 51251 / DSM 11541 / JCM 21823 / NBRC 15573 / CFN 42)).